The following is a 425-amino-acid chain: Histidinol dehydrogenase (425 aa).

Residues Tyr-124, Gln-184, and Asn-207 each contribute to the NAD(+) site. Substrate-binding residues include Ser-230, Gln-252, and His-255. Zn(2+) contacts are provided by Gln-252 and His-255. Residues Glu-321 and His-322 each act as proton acceptor in the active site. Substrate is bound by residues His-322, Asp-355, Glu-409, and His-414. Asp-355 serves as a coordination point for Zn(2+). His-414 serves as a coordination point for Zn(2+).

The protein belongs to the histidinol dehydrogenase family. It depends on Zn(2+) as a cofactor.

It catalyses the reaction L-histidinol + 2 NAD(+) + H2O = L-histidine + 2 NADH + 3 H(+). It participates in amino-acid biosynthesis; L-histidine biosynthesis; L-histidine from 5-phospho-alpha-D-ribose 1-diphosphate: step 9/9. Functionally, catalyzes the sequential NAD-dependent oxidations of L-histidinol to L-histidinaldehyde and then to L-histidine. The chain is Histidinol dehydrogenase from Halobacterium salinarum (strain ATCC 700922 / JCM 11081 / NRC-1) (Halobacterium halobium).